The following is a 362-amino-acid chain: UDP-N-acetylglucosamine--N-acetylmuramyl-(pentapeptide) pyrophosphoryl-undecaprenol N-acetylglucosamine transferase (362 aa).

UDP-N-acetyl-alpha-D-glucosamine is bound by residues 14–16 (TGG), arginine 170, serine 199, and glutamine 289.

It belongs to the glycosyltransferase 28 family. MurG subfamily.

The protein localises to the cell inner membrane. It carries out the reaction di-trans,octa-cis-undecaprenyl diphospho-N-acetyl-alpha-D-muramoyl-L-alanyl-D-glutamyl-meso-2,6-diaminopimeloyl-D-alanyl-D-alanine + UDP-N-acetyl-alpha-D-glucosamine = di-trans,octa-cis-undecaprenyl diphospho-[N-acetyl-alpha-D-glucosaminyl-(1-&gt;4)]-N-acetyl-alpha-D-muramoyl-L-alanyl-D-glutamyl-meso-2,6-diaminopimeloyl-D-alanyl-D-alanine + UDP + H(+). The protein operates within cell wall biogenesis; peptidoglycan biosynthesis. Its function is as follows. Cell wall formation. Catalyzes the transfer of a GlcNAc subunit on undecaprenyl-pyrophosphoryl-MurNAc-pentapeptide (lipid intermediate I) to form undecaprenyl-pyrophosphoryl-MurNAc-(pentapeptide)GlcNAc (lipid intermediate II). This chain is UDP-N-acetylglucosamine--N-acetylmuramyl-(pentapeptide) pyrophosphoryl-undecaprenol N-acetylglucosamine transferase, found in Borrelia hermsii (strain HS1 / DAH).